Reading from the N-terminus, the 244-residue chain is Cell division protein ZapD (244 aa).

This sequence belongs to the ZapD family. Interacts with FtsZ.

It localises to the cytoplasm. Functionally, cell division factor that enhances FtsZ-ring assembly. Directly interacts with FtsZ and promotes bundling of FtsZ protofilaments, with a reduction in FtsZ GTPase activity. The protein is Cell division protein ZapD of Shewanella sp. (strain MR-4).